A 191-amino-acid polypeptide reads, in one-letter code: Glycerol-3-phosphate acyltransferase (191 aa).

5 helical membrane-spanning segments follow: residues 3 to 23, 51 to 71, 78 to 98, 108 to 128, and 150 to 170; these read YLIV…FILT, TLGY…VLYV, YIFI…WLKF, VGIL…SWAV, and YLIV…VLIF.

It belongs to the PlsY family. As to quaternary structure, probably interacts with PlsX.

The protein resides in the cell inner membrane. The enzyme catalyses an acyl phosphate + sn-glycerol 3-phosphate = a 1-acyl-sn-glycero-3-phosphate + phosphate. It functions in the pathway lipid metabolism; phospholipid metabolism. In terms of biological role, catalyzes the transfer of an acyl group from acyl-phosphate (acyl-PO(4)) to glycerol-3-phosphate (G3P) to form lysophosphatidic acid (LPA). This enzyme utilizes acyl-phosphate as fatty acyl donor, but not acyl-CoA or acyl-ACP. In Pelagibacter ubique (strain HTCC1062), this protein is Glycerol-3-phosphate acyltransferase.